Here is a 144-residue protein sequence, read N- to C-terminus: MEKFLDINEIKKIIPHRYPFLLVDKITELEEGKSAVGYKNVTANEYFFNGHFPEEPVMPGVLIIEALAQVGAVAILSKEEFKGKIAYFGGINKAKFRKKVVPGDVLRLSIELTKIKGVAGVGKAVATVDGKVVAEAELLFVIGK.

The active site involves His-51.

This sequence belongs to the thioester dehydratase family. FabZ subfamily.

Its subcellular location is the cytoplasm. The enzyme catalyses a (3R)-hydroxyacyl-[ACP] = a (2E)-enoyl-[ACP] + H2O. In terms of biological role, involved in unsaturated fatty acids biosynthesis. Catalyzes the dehydration of short chain beta-hydroxyacyl-ACPs and long chain saturated and unsaturated beta-hydroxyacyl-ACPs. The chain is 3-hydroxyacyl-[acyl-carrier-protein] dehydratase FabZ from Clostridium botulinum (strain Loch Maree / Type A3).